Reading from the N-terminus, the 447-residue chain is Tubulin beta-4 chain (447 aa).

Positions 11, 69, 138, 142, 143, 144, 204, and 226 each coordinate GTP. Position 69 (Glu69) interacts with Mg(2+). Residues 423–447 form a disordered region; it reads QQYQDATADEEGEYEDEEQQEADDM. The span at 429-447 shows a compositional bias: acidic residues; sequence TADEEGEYEDEEQQEADDM.

This sequence belongs to the tubulin family. In terms of assembly, dimer of alpha and beta chains. A typical microtubule is a hollow water-filled tube with an outer diameter of 25 nm and an inner diameter of 15 nM. Alpha-beta heterodimers associate head-to-tail to form protofilaments running lengthwise along the microtubule wall with the beta-tubulin subunit facing the microtubule plus end conferring a structural polarity. Microtubules usually have 13 protofilaments but different protofilament numbers can be found in some organisms and specialized cells. Mg(2+) serves as cofactor. In terms of tissue distribution, expressed in roots and leaf sheaths.

The protein resides in the cytoplasm. The protein localises to the cytoskeleton. Tubulin is the major constituent of microtubules, a cylinder consisting of laterally associated linear protofilaments composed of alpha- and beta-tubulin heterodimers. Microtubules grow by the addition of GTP-tubulin dimers to the microtubule end, where a stabilizing cap forms. Below the cap, tubulin dimers are in GDP-bound state, owing to GTPase activity of alpha-tubulin. The polypeptide is Tubulin beta-4 chain (TUBB4) (Oryza sativa subsp. japonica (Rice)).